The chain runs to 251 residues: Putative (5-formylfuran-3-yl)methyl phosphate synthase (251 aa).

Lys29 functions as the Schiff-base intermediate with substrate in the catalytic mechanism. Lys87 (proton acceptor) is an active-site residue.

This sequence belongs to the MfnB family.

It carries out the reaction 2 D-glyceraldehyde 3-phosphate = 4-(hydroxymethyl)-2-furancarboxaldehyde phosphate + phosphate + 2 H2O. Functionally, catalyzes the formation of 4-(hydroxymethyl)-2-furancarboxaldehyde phosphate (4-HFC-P) from two molecules of glyceraldehyde-3-P (GA-3-P). This is Putative (5-formylfuran-3-yl)methyl phosphate synthase from Kitasatospora aureofaciens (Streptomyces aureofaciens).